A 212-amino-acid chain; its full sequence is 2-C-methyl-D-erythritol 4-phosphate cytidylyltransferase (212 aa).

The protein belongs to the IspD/TarI cytidylyltransferase family. IspD subfamily.

The catalysed reaction is 2-C-methyl-D-erythritol 4-phosphate + CTP + H(+) = 4-CDP-2-C-methyl-D-erythritol + diphosphate. It participates in isoprenoid biosynthesis; isopentenyl diphosphate biosynthesis via DXP pathway; isopentenyl diphosphate from 1-deoxy-D-xylulose 5-phosphate: step 2/6. Its function is as follows. Catalyzes the formation of 4-diphosphocytidyl-2-C-methyl-D-erythritol from CTP and 2-C-methyl-D-erythritol 4-phosphate (MEP). This is 2-C-methyl-D-erythritol 4-phosphate cytidylyltransferase from Chlamydia felis (strain Fe/C-56) (Chlamydophila felis).